A 373-amino-acid polypeptide reads, in one-letter code: Glutamate 5-kinase 2 (373 aa).

Residue Lys11 coordinates ATP. Substrate is bound by residues Ser51, Asp138, and Asn150. ATP is bound by residues 170–171 (SD) and 212–218 (TGGMKSK). The region spanning 279-355 (EGDIVVHNES…TNQETAASSQ (77 aa)) is the PUA domain.

This sequence belongs to the glutamate 5-kinase family.

Its subcellular location is the cytoplasm. The enzyme catalyses L-glutamate + ATP = L-glutamyl 5-phosphate + ADP. It functions in the pathway amino-acid biosynthesis; L-proline biosynthesis; L-glutamate 5-semialdehyde from L-glutamate: step 1/2. In terms of biological role, catalyzes the transfer of a phosphate group to glutamate to form L-glutamate 5-phosphate. The sequence is that of Glutamate 5-kinase 2 from Bacillus licheniformis (strain ATCC 14580 / DSM 13 / JCM 2505 / CCUG 7422 / NBRC 12200 / NCIMB 9375 / NCTC 10341 / NRRL NRS-1264 / Gibson 46).